A 230-amino-acid polypeptide reads, in one-letter code: Large ribosomal subunit protein uL1 (230 aa).

The protein belongs to the universal ribosomal protein uL1 family. As to quaternary structure, part of the 50S ribosomal subunit.

Binds directly to 23S rRNA. The L1 stalk is quite mobile in the ribosome, and is involved in E site tRNA release. In terms of biological role, protein L1 is also a translational repressor protein, it controls the translation of the L11 operon by binding to its mRNA. In Rhodopseudomonas palustris (strain BisB18), this protein is Large ribosomal subunit protein uL1.